The sequence spans 434 residues: Fez family zinc finger protein 2 (434 aa).

Residues 27 to 42 (SLAFSIERIMAKTSEP) carry the Engrailed homology 1 repressor motif. C2H2-type zinc fingers lie at residues 253-275 (FTCE…MPVH), 281-303 (FVCK…KIIH), 309-331 (HKCN…IRIH), 337-359 (FVCE…KLTH), 365-387 (YKCS…MHTH), and 393-416 (FTCA…RKLH).

Belongs to the krueppel C2H2-type zinc-finger protein family.

It localises to the nucleus. Its function is as follows. Transcription repressor. Component of the regulatory cascade that controls the development of dopaminergic (DA) and serotonergic (5HT) neurons. In Xenopus laevis (African clawed frog), this protein is Fez family zinc finger protein 2 (fezf2).